Consider the following 560-residue polypeptide: Eukaryotic translation initiation factor 3 subunit D-1 (560 aa).

A disordered region spans residues 98–166 (VQKPPHQRGR…RGPPPKMRES (69 aa)). Residues 100–121 (KPPHQRGRFRNMRNSRSGRGRN) are compositionally biased toward basic residues. A Phosphothreonine modification is found at threonine 128. Over residues 147 to 156 (GRGMGKKFGH) the composition is skewed to basic residues. Residues 291 to 305 (EFDLLTVNESSVEPP) form an RNA gate region.

It belongs to the eIF-3 subunit D family. Component of the eukaryotic translation initiation factor 3 (eIF-3) complex. The eIF-3 complex interacts with pix.

Its subcellular location is the cytoplasm. Its function is as follows. mRNA cap-binding component of the eukaryotic translation initiation factor 3 (eIF-3) complex, which is involved in protein synthesis of a specialized repertoire of mRNAs and, together with other initiation factors, stimulates binding of mRNA and methionyl-tRNAi to the 40S ribosome. The eIF-3 complex specifically targets and initiates translation of a subset of mRNAs involved in cell proliferation. In the eIF-3 complex, eif3d specifically recognizes and binds the 7-methylguanosine cap of a subset of mRNAs. This Drosophila sechellia (Fruit fly) protein is Eukaryotic translation initiation factor 3 subunit D-1.